Consider the following 366-residue polypeptide: G kinase-anchoring protein 1 (366 aa).

The segment at methionine 1 to aspartate 95 is interaction with IRS1. Disordered regions lie at residues glutamine 20–asparagine 110 and glutamate 147–leucine 177. A phosphoserine mark is found at serine 23, serine 25, and serine 27. The segment covering threonine 39–threonine 50 has biased composition (polar residues). Residues serine 47–alanine 77 are a coiled coil. The residue at position 106 (serine 106) is a Phosphoserine; by PKG. 2 coiled-coil regions span residues alanine 128–valine 160 and glutamate 243–glycine 353.

The protein belongs to the GKAP1 family. In terms of assembly, interacts with PRKG1 and IRS1.

Its subcellular location is the golgi apparatus. Its function is as follows. Regulates insulin-dependent IRS1 tyrosine phosphorylation in adipocytes by modulating the availability of IRS1 to IR tyrosine kinase. Its association with IRS1 is required for insulin-induced translocation of SLC2A4 to the cell membrane. Involved in TNF-induced impairment of insulin-dependent IRS1 tyrosine phosphorylation. This Homo sapiens (Human) protein is G kinase-anchoring protein 1 (GKAP1).